The sequence spans 104 residues: AIADGTSMITENVFEARFRFVEEMIRLGADARTDGHHAVVRGIPQLSSAPVWSSDIRAGAGLVLAGLVADGETEVHDVFHIDRGYPLFVENLVSLGAEIERVSS.

Valine 13 lines the UDP-N-acetyl-alpha-D-glucosamine pocket.

Belongs to the EPSP synthase family. MurA subfamily.

The protein resides in the cytoplasm. The enzyme catalyses phosphoenolpyruvate + UDP-N-acetyl-alpha-D-glucosamine = UDP-N-acetyl-3-O-(1-carboxyvinyl)-alpha-D-glucosamine + phosphate. Its pathway is cell wall biogenesis; peptidoglycan biosynthesis. Its function is as follows. Cell wall formation. Adds enolpyruvyl to UDP-N-acetylglucosamine. This chain is UDP-N-acetylglucosamine 1-carboxyvinyltransferase (murA), found in Mycolicibacterium smegmatis (Mycobacterium smegmatis).